A 409-amino-acid chain; its full sequence is Carbamoyl phosphate synthase arginine-specific small chain (409 aa).

Residues 197-389 (NVALIDCGVK…FDNMSQYRAL (193 aa)) enclose the Glutamine amidotransferase type-1 domain. The active-site Nucleophile is the C277. Catalysis depends on residues H362 and E364.

The protein belongs to the CarA family. In terms of assembly, heterodimer composed of 2 chains; the small (or glutamine) chain promotes the hydrolysis of glutamine to ammonia, which is used by the large (or ammonia) chain to synthesize carbamoyl phosphate.

The protein resides in the cytoplasm. It carries out the reaction hydrogencarbonate + L-glutamine + 2 ATP + H2O = carbamoyl phosphate + L-glutamate + 2 ADP + phosphate + 2 H(+). The catalysed reaction is L-glutamine + H2O = L-glutamate + NH4(+). The protein operates within amino-acid biosynthesis; L-arginine biosynthesis; carbamoyl phosphate from bicarbonate: step 1/1. Small subunit of the arginine-specific carbamoyl phosphate synthase (CPSase). CPSase catalyzes the formation of carbamoyl phosphate from the ammonia moiety of glutamine, carbonate, and phosphate donated by ATP, constituting the first step of 2 biosynthetic pathways, one leading to arginine and/or urea and the other to pyrimidine nucleotides. The small subunit (glutamine amidotransferase) binds and cleaves glutamine to supply the large subunit with the substrate ammonia. The sequence is that of Carbamoyl phosphate synthase arginine-specific small chain (CPA1) from Kluyveromyces lactis (strain ATCC 8585 / CBS 2359 / DSM 70799 / NBRC 1267 / NRRL Y-1140 / WM37) (Yeast).